A 165-amino-acid polypeptide reads, in one-letter code: Chorismate pyruvate-lyase (165 aa).

4 residues coordinate substrate: Met35, Arg77, Leu115, and Glu156.

Belongs to the UbiC family. As to quaternary structure, monomer.

Its subcellular location is the cytoplasm. The enzyme catalyses chorismate = 4-hydroxybenzoate + pyruvate. It functions in the pathway cofactor biosynthesis; ubiquinone biosynthesis. In terms of biological role, removes the pyruvyl group from chorismate, with concomitant aromatization of the ring, to provide 4-hydroxybenzoate (4HB) for the ubiquinone pathway. The polypeptide is Chorismate pyruvate-lyase (Escherichia coli O17:K52:H18 (strain UMN026 / ExPEC)).